A 375-amino-acid chain; its full sequence is Putative serine protease 47 (375 aa).

Positions 1–23 are cleaved as a signal peptide; that stretch reads MGYCQGVSQVAVVLLMFPKEKEA. A disordered region spans residues 41–60; sequence DGQLPMGPHSRASQVAPETT. The span at 51–60 shows a compositional bias: polar residues; sequence RASQVAPETT. The 243-residue stretch at 81–323 folds into the Peptidase S1 domain; that stretch reads IYGGRDAAAG…FINWIDEIMR (243 aa). A disulfide bridge links Cys106 with Cys122. Active-site charge relay system residues include His121 and Asp172. N-linked (GlcNAc...) asparagine glycans are attached at residues Asn183 and Asn203. A disulfide bridge connects residues Cys206 and Cys281. Ser275 serves as the catalytic Charge relay system.

Belongs to the peptidase S1 family.

Its subcellular location is the secreted. This Homo sapiens (Human) protein is Putative serine protease 47 (PRSS47P).